The following is a 462-amino-acid chain: tRNA modification GTPase MnmE (462 aa).

Residues arginine 26, glutamate 91, and arginine 130 each contribute to the (6S)-5-formyl-5,6,7,8-tetrahydrofolate site. The TrmE-type G domain occupies 228 to 382; sequence GLSTAKIGRP…IEERINDIFF (155 aa). Asparagine 238 is a binding site for K(+). Residues 238–243, 257–263, and 282–285 each bind GTP; these read NVGKSQ, TDIEGTT, and DTAG. Serine 242 provides a ligand contact to Mg(2+). The K(+) site is built by threonine 257, isoleucine 259, and threonine 262. Threonine 263 provides a ligand contact to Mg(2+). Lysine 462 provides a ligand contact to (6S)-5-formyl-5,6,7,8-tetrahydrofolate.

Belongs to the TRAFAC class TrmE-Era-EngA-EngB-Septin-like GTPase superfamily. TrmE GTPase family. Homodimer. Heterotetramer of two MnmE and two MnmG subunits. K(+) is required as a cofactor.

The protein resides in the cytoplasm. In terms of biological role, exhibits a very high intrinsic GTPase hydrolysis rate. Involved in the addition of a carboxymethylaminomethyl (cmnm) group at the wobble position (U34) of certain tRNAs, forming tRNA-cmnm(5)s(2)U34. This Streptococcus agalactiae protein is tRNA modification GTPase MnmE.